The sequence spans 133 residues: Aspartate 1-decarboxylase (133 aa).

S26 functions as the Schiff-base intermediate with substrate; via pyruvic acid in the catalytic mechanism. S26 bears the Pyruvic acid (Ser) mark. T58 serves as a coordination point for substrate. The Proton donor role is filled by Y59. 74–76 (GAA) lines the substrate pocket.

It belongs to the PanD family. As to quaternary structure, heterooctamer of four alpha and four beta subunits. Pyruvate is required as a cofactor. Is synthesized initially as an inactive proenzyme, which is activated by self-cleavage at a specific serine bond to produce a beta-subunit with a hydroxyl group at its C-terminus and an alpha-subunit with a pyruvoyl group at its N-terminus.

It is found in the cytoplasm. It catalyses the reaction L-aspartate + H(+) = beta-alanine + CO2. The protein operates within cofactor biosynthesis; (R)-pantothenate biosynthesis; beta-alanine from L-aspartate: step 1/1. Functionally, catalyzes the pyruvoyl-dependent decarboxylation of aspartate to produce beta-alanine. This chain is Aspartate 1-decarboxylase, found in Legionella pneumophila (strain Paris).